Here is a 641-residue protein sequence, read N- to C-terminus: Chaperone protein DnaK (641 aa).

At threonine 198 the chain carries Phosphothreonine; by autocatalysis. 3 stretches are compositionally biased toward basic and acidic residues: residues 514-529, 540-554, and 608-621; these read AEANAEADKKRREGVE, SSEKSLQEHGDKVSE, and AHADAAADAKRSGD. 2 disordered regions span residues 514–554 and 604–641; these read AEAN…KVSE and QTESAHADAAADAKRSGDDVVDADYEEVKDEDDRKRSA. Acidic residues predominate over residues 622 to 633; the sequence is DVVDADYEEVKD.

This sequence belongs to the heat shock protein 70 family.

Acts as a chaperone. This Sinorhizobium medicae (strain WSM419) (Ensifer medicae) protein is Chaperone protein DnaK.